The sequence spans 285 residues: Energy-coupling factor transporter ATP-binding protein EcfA3 (285 aa).

Positions 6-242 (LKVEELNYNY…KEVIRKVNLR (237 aa)) constitute an ABC transporter domain. Residue 39–46 (GGNGVGKS) coordinates ATP.

This sequence belongs to the ABC transporter superfamily. Energy-coupling factor EcfA family. As to quaternary structure, forms a stable energy-coupling factor (ECF) transporter complex composed of 2 membrane-embedded substrate-binding proteins (S component), 2 ATP-binding proteins (A component) and 2 transmembrane proteins (T component).

The protein resides in the cell membrane. Functionally, ATP-binding (A) component of a common energy-coupling factor (ECF) ABC-transporter complex. Unlike classic ABC transporters this ECF transporter provides the energy necessary to transport a number of different substrates. This Clostridium perfringens (strain ATCC 13124 / DSM 756 / JCM 1290 / NCIMB 6125 / NCTC 8237 / Type A) protein is Energy-coupling factor transporter ATP-binding protein EcfA3.